Here is a 35-residue protein sequence, read N- to C-terminus: uncharacterized protein (35 aa).

The N-terminal stretch at 1 to 18 (MRSLVFVQLSLLSWEIFC) is a signal peptide.

This is an uncharacterized protein from Saccharomyces cerevisiae (strain ATCC 204508 / S288c) (Baker's yeast).